We begin with the raw amino-acid sequence, 277 residues long: Large ribosomal subunit protein uL2 (277 aa).

2 disordered regions span residues 32–58 (KSLT…RGGG) and 225–277 (VAMN…RRNN).

Belongs to the universal ribosomal protein uL2 family. In terms of assembly, part of the 50S ribosomal subunit. Forms a bridge to the 30S subunit in the 70S ribosome.

Its function is as follows. One of the primary rRNA binding proteins. Required for association of the 30S and 50S subunits to form the 70S ribosome, for tRNA binding and peptide bond formation. It has been suggested to have peptidyltransferase activity; this is somewhat controversial. Makes several contacts with the 16S rRNA in the 70S ribosome. The sequence is that of Large ribosomal subunit protein uL2 from Borrelia recurrentis (strain A1).